Consider the following 284-residue polypeptide: 2-dehydro-3-deoxyphosphooctonate aldolase (284 aa).

The protein belongs to the KdsA family.

It localises to the cytoplasm. It catalyses the reaction D-arabinose 5-phosphate + phosphoenolpyruvate + H2O = 3-deoxy-alpha-D-manno-2-octulosonate-8-phosphate + phosphate. Its pathway is carbohydrate biosynthesis; 3-deoxy-D-manno-octulosonate biosynthesis; 3-deoxy-D-manno-octulosonate from D-ribulose 5-phosphate: step 2/3. It functions in the pathway bacterial outer membrane biogenesis; lipopolysaccharide biosynthesis. In Ralstonia pickettii (strain 12J), this protein is 2-dehydro-3-deoxyphosphooctonate aldolase.